The primary structure comprises 913 residues: DNA mismatch repair protein MutS (913 aa).

G720–S727 provides a ligand contact to ATP.

Belongs to the DNA mismatch repair MutS family.

This protein is involved in the repair of mismatches in DNA. It is possible that it carries out the mismatch recognition step. This protein has a weak ATPase activity. This is DNA mismatch repair protein MutS from Prochlorococcus marinus (strain AS9601).